The following is a 396-amino-acid chain: Pyridinium-3,5-bisthiocarboxylic acid mononucleotide nickel insertion protein (396 aa).

The protein belongs to the LarC family.

The catalysed reaction is Ni(II)-pyridinium-3,5-bisthiocarboxylate mononucleotide = pyridinium-3,5-bisthiocarboxylate mononucleotide + Ni(2+). Its function is as follows. Involved in the biosynthesis of a nickel-pincer cofactor ((SCS)Ni(II) pincer complex). Binds Ni(2+), and functions in nickel delivery to pyridinium-3,5-bisthiocarboxylic acid mononucleotide (P2TMN), to form the mature cofactor. Is thus probably required for the activation of nickel-pincer cofactor-dependent enzymes. This Moorella thermoacetica (strain ATCC 39073 / JCM 9320) protein is Pyridinium-3,5-bisthiocarboxylic acid mononucleotide nickel insertion protein.